We begin with the raw amino-acid sequence, 529 residues long: UDP-glucuronosyltransferase 2B7 (529 aa).

The N-terminal stretch at 1–23 (MSVKWTSVILLIQLSFCFSSGNC) is a signal peptide. 3 N-linked (GlcNAc...) asparagine glycosylation sites follow: asparagine 67, asparagine 68, and asparagine 315. Residues 373–379 (THGGANG) and aspartate 398 each bind UDP-alpha-D-glucuronate. Residues 493–509 (VIGFLLVCVATVIFIVT) form a helical membrane-spanning segment.

This sequence belongs to the UDP-glycosyltransferase family.

Its subcellular location is the endoplasmic reticulum membrane. It carries out the reaction glucuronate acceptor + UDP-alpha-D-glucuronate = acceptor beta-D-glucuronoside + UDP + H(+). The enzyme catalyses 17alpha-estradiol + UDP-alpha-D-glucuronate = 17alpha-estradiol 17-O-(beta-D-glucuronate) + UDP + H(+). The catalysed reaction is 17beta-estradiol + UDP-alpha-D-glucuronate = 17beta-estradiol 17-O-(beta-D-glucuronate) + UDP + H(+). It catalyses the reaction 2-hydroxy-17beta-estradiol + UDP-alpha-D-glucuronate = 2-hydroxy-17beta-estradiol 3-O-(beta-D-glucuronate) + UDP + H(+). It carries out the reaction 4-hydroxy-17beta-estradiol + UDP-alpha-D-glucuronate = 17beta-estradiol 4-O-(beta-D-glucuronate) + UDP + H(+). The enzyme catalyses 4-hydroxyestrone + UDP-alpha-D-glucuronate = estrone 4-O-(beta-D-glucuronate) + UDP + H(+). The catalysed reaction is 16alpha-hydroxyestrone + UDP-alpha-D-glucuronate = 16alpha-hydroxyestrone 16-O-(beta-D-glucuronate) + UDP + H(+). It catalyses the reaction 16alpha,17beta-estriol + UDP-alpha-D-glucuronate = 16alpha,17beta-estriol 16-O-(beta-D-glucuronate) + UDP + H(+). It carries out the reaction 16beta,17beta-estriol + UDP-alpha-D-glucuronate = 16beta,17beta-estriol 16-O-(beta-D-glucuronate) + UDP + H(+). The enzyme catalyses 16alpha,17alpha-estriol + UDP-alpha-D-glucuronate = 16alpha,17alpha-estriol 16-O-(beta-D-glucuronate) + UDP + H(+). The catalysed reaction is 16alpha,17alpha-estriol + UDP-alpha-D-glucuronate = 16alpha,17alpha-estriol 17-O-(beta-D-glucuronate) + UDP + H(+). It catalyses the reaction epitestosterone + UDP-alpha-D-glucuronate = epitestosterone 17-O-(beta-D-glucuronate) + UDP + H(+). It carries out the reaction hyodeoxycholate + UDP-alpha-D-glucuronate = hyodeoxycholate 6-O-(beta-D-glucuronate) + UDP + H(+). The enzyme catalyses hyocholate + UDP-alpha-D-glucuronate = hyocholate 6-O-(beta-D-glucuronate) + UDP + H(+). The catalysed reaction is all-trans-retinoate + UDP-alpha-D-glucuronate = all-trans-retinoyl-1-O-(beta-D-glucuronate) + UDP. It catalyses the reaction all-trans-4-hydroxyretinoate + UDP-alpha-D-glucuronate = all-trans-4-hydroxy-4-O-(beta-D-glucuronide)-retinoate + UDP + H(+). It carries out the reaction (E)-ferulate + UDP-alpha-D-glucuronate = (E)-ferulic acid beta-D-glucuronate ester + UDP. The enzyme catalyses 8-iso-prostaglandin F2alpha + UDP-alpha-D-glucuronate = 8-iso-prostaglandin F2alpha-glucuronide + UDP + H(+). The catalysed reaction is 5-epi-5-F2t-IsoP + UDP-alpha-D-glucuronate = 5-epi-5-F2t-IsoP-glucuronide + UDP + H(+). It catalyses the reaction (5Z,8Z,11Z,14Z)-eicosatetraenoate + UDP-alpha-D-glucuronate = O-[(5Z),(8Z),(11Z),(14Z)-eicosatetraenoyl]-beta-D-glucuronate + UDP. It carries out the reaction 15-hydroxy-(5Z,8Z,11Z,13E)-eicosatetraenoate + UDP-alpha-D-glucuronate = 15-O-(beta-D-glucuronosyl)-(5Z,8Z,11Z,14Z)-eicosatetraenoate + UDP + H(+). The enzyme catalyses 20-hydroxy-(5Z,8Z,11Z,14Z)-eicosatetraenoate + UDP-alpha-D-glucuronate = 20-O-(beta-D-glucuronosyl)-(5Z,8Z,11Z,14Z)-eicosatetraenoate + UDP + H(+). The catalysed reaction is (E)-ferulate + UDP-alpha-D-glucuronate = (E)-4-O-(beta-D-glucuronosyl)-ferulate + UDP + H(+). It catalyses the reaction prostaglandin B1 + UDP-alpha-D-glucuronate = 15-O-(beta-D-glucuronosyl)-prostaglandin B1 + UDP + H(+). It carries out the reaction mycophenolate + UDP-alpha-D-glucuronate = mycophenolic acid O-acyl-beta-D-glucuronide + UDP. The enzyme catalyses losartan + UDP-alpha-D-glucuronate = losartan-2-N-beta-D-glucuronide + UDP. The catalysed reaction is candesartan + UDP-alpha-D-glucuronate = candesartan O-beta-D-glucuronoside + UDP. It catalyses the reaction candesartan + UDP-alpha-D-glucuronate = candesartan-2-N-beta-D-glucuronide + UDP. It carries out the reaction zolasartan + UDP-alpha-D-glucuronate = zolarsartan O-beta-D-glucuronoside + UDP. UDP-glucuronosyltransferase (UGT) that catalyzes phase II biotransformation reactions in which lipophilic substrates are conjugated with glucuronic acid to increase the metabolite's water solubility, thereby facilitating excretion into either the urine or bile. Essential for the elimination and detoxification of drugs, xenobiotics and endogenous compounds. Catalyzes the glucuronidation of endogenous steroid hormones such as androgens (epitestosterone, androsterone) and estrogens (estradiol, epiestradiol, estriol, catechol estrogens). Also regulates the levels of retinoic acid, a major metabolite of vitamin A involved in apoptosis, cellular growth and differentiation, and embryonic development. Contributes to bile acid (BA) detoxification by catalyzing the glucuronidation of BA substrates, which are natural detergents for dietary lipids absorption. Involved in the glucuronidation of arachidonic acid (AA) and AA-derived eicosanoids including 15-HETE, 20-HETE, PGE2, PGB1 and F2-isoprostanes (8-iso-PGF2alpha and 5-epi-5-F2t-IsoP). Involved in the glucuronidation of the phytochemical ferulic acid at the phenolic or the carboxylic acid group. Involved in the glucuronidation of the AGTR1 angiotensin receptor antagonist losartan, caderastan and zolarsatan, drugs which can inhibit the effect of angiotensin II. Also metabolizes mycophenolate, an immunosuppressive agent. This chain is UDP-glucuronosyltransferase 2B7, found in Homo sapiens (Human).